We begin with the raw amino-acid sequence, 300 residues long: NAD kinase (300 aa).

The active-site Proton acceptor is the Asp-75. NAD(+) contacts are provided by residues 75-76 (DG), 149-150 (ND), Arg-177, Asp-179, 190-195 (TAYALS), Ala-214, and Gln-248.

It belongs to the NAD kinase family. It depends on a divalent metal cation as a cofactor.

It is found in the cytoplasm. It carries out the reaction NAD(+) + ATP = ADP + NADP(+) + H(+). In terms of biological role, involved in the regulation of the intracellular balance of NAD and NADP, and is a key enzyme in the biosynthesis of NADP. Catalyzes specifically the phosphorylation on 2'-hydroxyl of the adenosine moiety of NAD to yield NADP. The polypeptide is NAD kinase (Burkholderia ambifaria (strain MC40-6)).